The primary structure comprises 78 residues: Large ribosomal subunit protein bL28 (78 aa).

It belongs to the bacterial ribosomal protein bL28 family.

In Xylella fastidiosa (strain 9a5c), this protein is Large ribosomal subunit protein bL28 (rpmB).